A 497-amino-acid polypeptide reads, in one-letter code: Aspartyl/glutamyl-tRNA(Asn/Gln) amidotransferase subunit B (497 aa).

This sequence belongs to the GatB/GatE family. GatB subfamily. In terms of assembly, heterotrimer of A, B and C subunits.

The enzyme catalyses L-glutamyl-tRNA(Gln) + L-glutamine + ATP + H2O = L-glutaminyl-tRNA(Gln) + L-glutamate + ADP + phosphate + H(+). It carries out the reaction L-aspartyl-tRNA(Asn) + L-glutamine + ATP + H2O = L-asparaginyl-tRNA(Asn) + L-glutamate + ADP + phosphate + 2 H(+). In terms of biological role, allows the formation of correctly charged Asn-tRNA(Asn) or Gln-tRNA(Gln) through the transamidation of misacylated Asp-tRNA(Asn) or Glu-tRNA(Gln) in organisms which lack either or both of asparaginyl-tRNA or glutaminyl-tRNA synthetases. The reaction takes place in the presence of glutamine and ATP through an activated phospho-Asp-tRNA(Asn) or phospho-Glu-tRNA(Gln). The sequence is that of Aspartyl/glutamyl-tRNA(Asn/Gln) amidotransferase subunit B from Novosphingobium aromaticivorans (strain ATCC 700278 / DSM 12444 / CCUG 56034 / CIP 105152 / NBRC 16084 / F199).